The primary structure comprises 504 residues: Cytochrome P450 2D10 (504 aa).

S382 carries O-linked (GlcNAc) serine glycosylation. C446 lines the heme pocket.

It belongs to the cytochrome P450 family. The cofactor is heme.

It is found in the endoplasmic reticulum membrane. The protein localises to the microsome membrane. It catalyses the reaction an organic molecule + reduced [NADPH--hemoprotein reductase] + O2 = an alcohol + oxidized [NADPH--hemoprotein reductase] + H2O + H(+). In terms of biological role, cytochromes P450 are a group of heme-thiolate monooxygenases. In liver microsomes, this enzyme is involved in an NADPH-dependent electron transport pathway. It oxidizes a variety of structurally unrelated compounds, including steroids, fatty acids, and xenobiotics. The sequence is that of Cytochrome P450 2D10 (Cyp2d10) from Rattus norvegicus (Rat).